The following is a 180-amino-acid chain: Fucolectin-3 (180 aa).

Positions 1–22 (MEVKMIILLFQILAISTLKSDS) are cleaved as a signal peptide. The F5/8 type C-like stretch occupies residues 31 to 179 (QENVALRGRA…VEVNVLFPAP (149 aa)). Ca(2+)-binding residues include asparagine 58, aspartate 61, asparagine 63, and serine 72. Intrachain disulfides connect cysteine 73/cysteine 168, cysteine 104/cysteine 105, and cysteine 130/cysteine 146. Alpha-L-fucose-binding residues include histidine 75 and arginine 101. The Cell attachment site motif lies at 101–103 (RGD). Arginine 108 provides a ligand contact to alpha-L-fucose. Residues cysteine 168 and glutamate 169 each coordinate Ca(2+).

Belongs to the fucolectin family. Homotrimer. As to expression, parenchymal hepatocytes.

The protein localises to the secreted. Its subcellular location is the extracellular space. Its function is as follows. Acts as a defensive agent. Recognizes blood group fucosylated oligosaccharides including A, B, H and Lewis B-type antigens. Does not recognize Lewis A antigen and has low affinity for monovalent haptens. In Anguilla japonica (Japanese eel), this protein is Fucolectin-3.